The chain runs to 72 residues: DNA-directed RNA polymerase subunit epsilon (72 aa).

The protein belongs to the RNA polymerase subunit epsilon family. RNAP is composed of a core of 2 alpha, a beta and a beta' subunit. The core is associated with a delta subunit, and at least one of epsilon or omega. When a sigma factor is associated with the core the holoenzyme is formed, which can initiate transcription.

It carries out the reaction RNA(n) + a ribonucleoside 5'-triphosphate = RNA(n+1) + diphosphate. Its function is as follows. A non-essential component of RNA polymerase (RNAP). The chain is DNA-directed RNA polymerase subunit epsilon from Lactiplantibacillus plantarum (strain ATCC BAA-793 / NCIMB 8826 / WCFS1) (Lactobacillus plantarum).